The primary structure comprises 444 residues: Tryptophan 5-hydroxylase 1 (444 aa).

The region spanning 19–94 (TLIFSLKNEV…TVLSVDSPDQ (76 aa)) is the ACT domain. Serine 58 bears the Phosphoserine; by PKA mark. L-tryptophan is bound by residues tyrosine 235, arginine 257, and threonine 265. Positions 272, 277, and 317 each coordinate Fe cation. Serine 336 and isoleucine 366 together coordinate L-tryptophan.

Belongs to the biopterin-dependent aromatic amino acid hydroxylase family. Homotetramer. Interacts with DNAJC12. The cofactor is Fe(2+). In terms of processing, ubiquitinated, leading to its degradation by the proteasome. Ubiquitinated is triggered by phosphorylation. Post-translationally, phosphorylated; triggering degradation by the proteasome.

It catalyses the reaction (6R)-L-erythro-5,6,7,8-tetrahydrobiopterin + L-tryptophan + O2 = 5-hydroxy-L-tryptophan + (4aS,6R)-4a-hydroxy-L-erythro-5,6,7,8-tetrahydrobiopterin. Its pathway is aromatic compound metabolism; serotonin biosynthesis; serotonin from L-tryptophan: step 1/2. Its function is as follows. Oxidizes L-tryptophan to 5-hydroxy-l-tryptophan in the rate-determining step of serotonin biosynthesis. This is Tryptophan 5-hydroxylase 1 (Tph1) from Rattus norvegicus (Rat).